Here is a 458-residue protein sequence, read N- to C-terminus: Cytoplasmic tRNA 2-thiolation protein 2 (458 aa).

It belongs to the CTU2/NCS2 family.

It localises to the cytoplasm. The protein operates within tRNA modification; 5-methoxycarbonylmethyl-2-thiouridine-tRNA biosynthesis. Plays a central role in 2-thiolation of mcm(5)S(2)U at tRNA wobble positions of tRNA(Lys), tRNA(Glu) and tRNA(Gln). May act by forming a heterodimer with NCS6/CTU1 that ligates sulfur from thiocarboxylated URM1 onto the uridine of tRNAs at wobble position. This chain is Cytoplasmic tRNA 2-thiolation protein 2, found in Arabidopsis thaliana (Mouse-ear cress).